Consider the following 114-residue polypeptide: UPF0102 protein CD630_12710 (114 aa).

This sequence belongs to the UPF0102 family.

In Clostridioides difficile (strain 630) (Peptoclostridium difficile), this protein is UPF0102 protein CD630_12710.